The sequence spans 381 residues: GDP-mannose transporter (381 aa).

Residues 1–12 are compositionally biased toward basic and acidic residues; the sequence is MSDDKKSDDYRV. The interval 1 to 28 is disordered; the sequence is MSDDKKSDDYRVDMPSSRTSRAPSPIMR. At 1 to 36 the chain is on the cytoplasmic side; that stretch reads MSDDKKSDDYRVDMPSSRTSRAPSPIMRPALKSAPS. Residues 37 to 57 traverse the membrane as a helical segment; that stretch reads LTENPMAAVLAYCASSILMTV. Residues 58 to 67 lie on the Lumenal side of the membrane; sequence TNKYVLSGVD. Residues 68 to 88 form a helical membrane-spanning segment; the sequence is FNLNFFLLCVQSVVCVTAISI. Residues 89 to 107 are Cytoplasmic-facing; the sequence is CKAAGLITYRDFNTDEAKK. A helical membrane pass occupies residues 108 to 126; sequence WFPISLLLIGMIYTGTWAL. Over 127–130 the chain is Lumenal; that stretch reads KYLS. Residues 131-153 traverse the membrane as a helical segment; sequence IPVYTIFKNLTIILIAYGEVLWF. Residues 154-161 are Cytoplasmic-facing; that stretch reads GGSVTPMT. The chain crosses the membrane as a helical span at residues 162–184; it reads LFSFGLMVLSSIIAAWADIQHAL. Topologically, residues 185-199 are lumenal; it reads NSFGQQSEAANEALS. A helical membrane pass occupies residues 200–220; it reads TMHAGYLWMAFNCVCSATYLL. Over 221–242 the chain is Cytoplasmic; that stretch reads SMRKRIKLTNFKDYDTMYYNNL. The helical transmembrane segment at 243 to 263 threads the bilayer; that stretch reads LTIPILLVASILVEDWSSANI. Residues 264-274 are Lumenal-facing; sequence QKNFPPEQRNT. A helical transmembrane segment spans residues 275–295; it reads VIMVMVISGMSTVFISYTSAW. At 296–303 the chain is on the cytoplasmic side; the sequence is AVRVTSST. A helical membrane pass occupies residues 304–324; it reads TYSMVGALNKLPIAISGLVFF. The Lumenal segment spans residues 325-327; it reads DAP. The chain crosses the membrane as a helical span at residues 328 to 348; the sequence is VTFGSVSAIFVGFVSGIVYAV. The Cytoplasmic portion of the chain corresponds to 349-381; the sequence is AKVRQNSKPKTVLPTTNIPLSASSRSMQDSLKA.

Belongs to the TPT transporter family. SLC35D subfamily. As to quaternary structure, homooligomer.

The protein localises to the golgi apparatus membrane. Its subcellular location is the cytoplasmic vesicle membrane. The protein resides in the endoplasmic reticulum membrane. Functionally, involved in the import of GDP-mannose from the cytoplasm into the Golgi lumen. In Phaeosphaeria nodorum (strain SN15 / ATCC MYA-4574 / FGSC 10173) (Glume blotch fungus), this protein is GDP-mannose transporter (VRG4).